Here is a 532-residue protein sequence, read N- to C-terminus: Pre-piRNA 3'-exonuclease trimmer (532 aa).

Positions 28, 30, 270, and 365 each coordinate Mg(2+). The helical transmembrane segment at 503–523 (AGRFAIWSGSIVTGGLALYLI) threads the bilayer.

The protein belongs to the CAF1 family. Interacts with Papi/Tdrkh; interaction takes place on the mitochondrial surface and recruits PNLDC1/trimmer to PIWI-bound pre-piRNAs. Mg(2+) is required as a cofactor.

It is found in the mitochondrion outer membrane. Its function is as follows. 3'-5' exonuclease that specifically cleaves precursor piRNAs (pre-piRNAs) at their 3' ends. Trims pre-piRNAs to their mature size, a process required for piRNAs maturation and stabilization, and subsequent pre-piRNAs 2'-O-methylation. The piRNA metabolic process mediates the repression of transposable elements during meiosis by forming complexes composed of piRNAs and Piwi proteins and govern the methylation and subsequent repression of transposons. This chain is Pre-piRNA 3'-exonuclease trimmer, found in Bombyx mori (Silk moth).